Consider the following 372-residue polypeptide: 4-hydroxy-3-methylbut-2-en-1-yl diphosphate synthase (flavodoxin) (372 aa).

Cysteine 270, cysteine 273, cysteine 305, and glutamate 312 together coordinate [4Fe-4S] cluster.

The protein belongs to the IspG family. The cofactor is [4Fe-4S] cluster.

It carries out the reaction (2E)-4-hydroxy-3-methylbut-2-enyl diphosphate + oxidized [flavodoxin] + H2O + 2 H(+) = 2-C-methyl-D-erythritol 2,4-cyclic diphosphate + reduced [flavodoxin]. The protein operates within isoprenoid biosynthesis; isopentenyl diphosphate biosynthesis via DXP pathway; isopentenyl diphosphate from 1-deoxy-D-xylulose 5-phosphate: step 5/6. Functionally, converts 2C-methyl-D-erythritol 2,4-cyclodiphosphate (ME-2,4cPP) into 1-hydroxy-2-methyl-2-(E)-butenyl 4-diphosphate. This chain is 4-hydroxy-3-methylbut-2-en-1-yl diphosphate synthase (flavodoxin), found in Escherichia coli (strain SMS-3-5 / SECEC).